The chain runs to 296 residues: Putative peptide transport system permease protein BruAb2_1032 (296 aa).

6 consecutive transmembrane segments (helical) span residues 35-55 (IGLV…WITN), 97-117 (LWIG…IGIA), 131-151 (VMDA…SAAL), 205-225 (ILPN…AYAI), 229-249 (ATLS…GSIV), and 260-280 (WWIM…INLI). Positions 97–281 (LWIGLTVAVL…ISALAINLIG (185 aa)) constitute an ABC transmembrane type-1 domain.

It belongs to the binding-protein-dependent transport system permease family. In terms of assembly, the complex is composed of two ATP-binding proteins (BruAb2_1033 and BruAb2_1034), two transmembrane proteins (BruAb2_1031 and BruAb2_1032) and a solute-binding protein (BruAb2_1030).

The protein localises to the cell inner membrane. Probably part of an ABC transporter complex that could be involved in peptide import. Probably responsible for the translocation of the substrate across the membrane. The sequence is that of Putative peptide transport system permease protein BruAb2_1032 from Brucella abortus biovar 1 (strain 9-941).